The primary structure comprises 469 residues: Cysteine--tRNA ligase (469 aa).

Residue cysteine 33 participates in Zn(2+) binding. Positions 35-45 (PTVYNLLHIGN) match the 'HIGH' region motif. Zn(2+)-binding residues include cysteine 214, histidine 239, and glutamate 243. Residues 271-275 (KMSKS) carry the 'KMSKS' region motif. Lysine 274 provides a ligand contact to ATP.

This sequence belongs to the class-I aminoacyl-tRNA synthetase family. As to quaternary structure, monomer. It depends on Zn(2+) as a cofactor.

The protein localises to the cytoplasm. The enzyme catalyses tRNA(Cys) + L-cysteine + ATP = L-cysteinyl-tRNA(Cys) + AMP + diphosphate. This chain is Cysteine--tRNA ligase, found in Petrotoga mobilis (strain DSM 10674 / SJ95).